A 307-amino-acid chain; its full sequence is Major immediate early protein (307 aa).

An RING-type zinc finger spans residues 39–92 (CAVCLETYCVQSNNIIDFLMPSECTHLFCYKCVLNMYKNAMNVPRAAVSCPMCN).

This is Major immediate early protein (PE38) from Orgyia pseudotsugata multicapsid polyhedrosis virus (OpMNPV).